Reading from the N-terminus, the 220-residue chain is Chaperone protein TorD (220 aa).

Belongs to the TorD/DmsD family. TorD subfamily.

The protein localises to the cytoplasm. Functionally, involved in the biogenesis of TorA. Acts on TorA before the insertion of the molybdenum cofactor and, as a result, probably favors a conformation of the apoenzyme that is competent for acquiring the cofactor. The polypeptide is Chaperone protein TorD (Vibrio cholerae serotype O1 (strain ATCC 39541 / Classical Ogawa 395 / O395)).